The sequence spans 420 residues: tRNA(Ile)-lysidine synthase, chloroplastic (420 aa).

Position 63-68 (63-68 (SGGQDS)) interacts with ATP.

The protein belongs to the tRNA(Ile)-lysidine synthase family.

The protein localises to the plastid. It is found in the chloroplast. The catalysed reaction is cytidine(34) in tRNA(Ile2) + L-lysine + ATP = lysidine(34) in tRNA(Ile2) + AMP + diphosphate + H(+). Its function is as follows. Ligates lysine onto the cytidine present at position 34 of the AUA codon-specific tRNA(Ile) that contains the anticodon CAU, in an ATP-dependent manner. Cytidine is converted to lysidine, thus changing the amino acid specificity of the tRNA from methionine to isoleucine. The polypeptide is tRNA(Ile)-lysidine synthase, chloroplastic (Zygnema circumcarinatum (Green alga)).